The chain runs to 249 residues: 1-(5-phosphoribosyl)-5-[(5-phosphoribosylamino)methylideneamino] imidazole-4-carboxamide isomerase (249 aa).

The active-site Proton acceptor is Asp-11. Residue Asp-133 is the Proton donor of the active site.

Belongs to the HisA/HisF family.

The protein localises to the cytoplasm. It catalyses the reaction 1-(5-phospho-beta-D-ribosyl)-5-[(5-phospho-beta-D-ribosylamino)methylideneamino]imidazole-4-carboxamide = 5-[(5-phospho-1-deoxy-D-ribulos-1-ylimino)methylamino]-1-(5-phospho-beta-D-ribosyl)imidazole-4-carboxamide. Its pathway is amino-acid biosynthesis; L-histidine biosynthesis; L-histidine from 5-phospho-alpha-D-ribose 1-diphosphate: step 4/9. The chain is 1-(5-phosphoribosyl)-5-[(5-phosphoribosylamino)methylideneamino] imidazole-4-carboxamide isomerase from Haemophilus influenzae (strain 86-028NP).